Reading from the N-terminus, the 258-residue chain is Type III pantothenate kinase (258 aa).

12-19 (DIGNTSIA) serves as a coordination point for ATP. Substrate is bound by residues Tyr94 and 109 to 112 (GSDV). Asp111 serves as the catalytic Proton acceptor. Asp132 lines the K(+) pocket. Thr135 contributes to the ATP binding site. Thr187 contributes to the substrate binding site.

It belongs to the type III pantothenate kinase family. As to quaternary structure, homodimer. Requires NH4(+) as cofactor. The cofactor is K(+).

The protein localises to the cytoplasm. It catalyses the reaction (R)-pantothenate + ATP = (R)-4'-phosphopantothenate + ADP + H(+). The protein operates within cofactor biosynthesis; coenzyme A biosynthesis; CoA from (R)-pantothenate: step 1/5. Functionally, catalyzes the phosphorylation of pantothenate (Pan), the first step in CoA biosynthesis. The sequence is that of Type III pantothenate kinase from Borreliella afzelii (strain PKo) (Borrelia afzelii).